We begin with the raw amino-acid sequence, 530 residues long: GH3 domain-containing protein (530 aa).

Residues 1-17 (MLLWPLLLLLLLLPTLA) form the signal peptide. A disordered region spans residues 99 to 122 (LTKASQTQQEDSGEQPLPPTSNQD). An N-linked (GlcNAc...) asparagine glycan is attached at Asn450. Position 489 is an N5-methylglutamine (Gln489).

Belongs to the GH3 family. Methylated at Gln-489 by N6AMT1.

The protein resides in the endoplasmic reticulum. The protein localises to the nucleus envelope. The chain is GH3 domain-containing protein (GHDC) from Homo sapiens (Human).